The primary structure comprises 390 residues: Methionyl-tRNA formyltransferase, mitochondrial (390 aa).

A mitochondrion-targeting transit peptide spans 1–33; sequence MRVLLRCCCGHLPVGGGAGRRSNPRWRALARLS.

It belongs to the Fmt family.

Its subcellular location is the mitochondrion. The catalysed reaction is L-methionyl-tRNA(fMet) + (6R)-10-formyltetrahydrofolate = N-formyl-L-methionyl-tRNA(fMet) + (6S)-5,6,7,8-tetrahydrofolate + H(+). Methionyl-tRNA formyltransferase that formylates methionyl-tRNA in mitochondria and is crucial for translation initiation. This Bos taurus (Bovine) protein is Methionyl-tRNA formyltransferase, mitochondrial (MTFMT).